The following is a 445-amino-acid chain: Phosphoglucosamine mutase (445 aa).

S102 functions as the Phosphoserine intermediate in the catalytic mechanism. Mg(2+) is bound by residues S102, D241, D243, and D245. Phosphoserine is present on S102.

This sequence belongs to the phosphohexose mutase family. Mg(2+) serves as cofactor. In terms of processing, activated by phosphorylation.

The catalysed reaction is alpha-D-glucosamine 1-phosphate = D-glucosamine 6-phosphate. Its function is as follows. Catalyzes the conversion of glucosamine-6-phosphate to glucosamine-1-phosphate. This Haemophilus influenzae (strain ATCC 51907 / DSM 11121 / KW20 / Rd) protein is Phosphoglucosamine mutase.